The chain runs to 861 residues: Rod cGMP-specific 3',5'-cyclic phosphodiesterase subunit alpha (861 aa).

At Gly-2 the chain carries N-acetylglycine. GAF domains follow at residues 73 to 222 and 254 to 431; these read QAER…NLIM and DIER…GWSV. The PDEase domain occupies 483–816; sequence EEEELAEILQ…KEWKALADEY (334 aa). His-559 (proton donor) is an active-site residue. The a divalent metal cation site is built by His-563, His-599, Asp-600, and Asp-720. The interval 821-861 is disordered; it reads KALEEEKQKQQTAKQGAAGDQPGGNPSPAGGAPASKSCCIQ. Over residues 830–861 the composition is skewed to low complexity; sequence QQTAKQGAAGDQPGGNPSPAGGAPASKSCCIQ. Cys-858 carries the cysteine methyl ester modification. Residue Cys-858 is the site of S-farnesyl cysteine attachment. Residues 859 to 861 constitute a propeptide, removed in mature form; it reads CIQ.

Belongs to the cyclic nucleotide phosphodiesterase family. Oligomer composed of two catalytic chains (alpha and beta), an inhibitory chain (gamma) and the delta chain. The cofactor is a divalent metal cation.

It is found in the cell membrane. Its subcellular location is the cell projection. It localises to the cilium. The protein localises to the photoreceptor outer segment. It carries out the reaction 3',5'-cyclic GMP + H2O = GMP + H(+). Functionally, rod-specific cGMP phosphodiesterase that catalyzes the hydrolysis of 3',5'-cyclic GMP. This protein participates in processes of transmission and amplification of the visual signal. This Canis lupus familiaris (Dog) protein is Rod cGMP-specific 3',5'-cyclic phosphodiesterase subunit alpha.